The following is a 779-amino-acid chain: Catalase-peroxidase (779 aa).

Positions 148–270 (WHSAGTYRIT…LGAVQMGLIY (123 aa)) form a cross-link, tryptophyl-tyrosyl-methioninium (Trp-Tyr) (with M-296). Histidine 149 functions as the Proton acceptor in the catalytic mechanism. Residues 270 to 296 (YVNPEGPNGKPDPIAAAKDIRETFFRM) constitute a cross-link (tryptophyl-tyrosyl-methioninium (Tyr-Met) (with W-148)). Position 311 (histidine 311) interacts with heme b.

Belongs to the peroxidase family. Peroxidase/catalase subfamily. Homodimer or homotetramer. It depends on heme b as a cofactor. In terms of processing, formation of the three residue Trp-Tyr-Met cross-link is important for the catalase, but not the peroxidase activity of the enzyme.

The catalysed reaction is H2O2 + AH2 = A + 2 H2O. It carries out the reaction 2 H2O2 = O2 + 2 H2O. In terms of biological role, bifunctional enzyme with both catalase and broad-spectrum peroxidase activity. The polypeptide is Catalase-peroxidase (Bradyrhizobium diazoefficiens (strain JCM 10833 / BCRC 13528 / IAM 13628 / NBRC 14792 / USDA 110)).